A 256-amino-acid chain; its full sequence is Ribonuclease HII (256 aa).

The RNase H type-2 domain occupies 72-256 (ALICGIDEVG…TFEPIKSLVN (185 aa)). A divalent metal cation-binding residues include D78, E79, and D170.

This sequence belongs to the RNase HII family. Requires Mn(2+) as cofactor. Mg(2+) serves as cofactor.

The protein resides in the cytoplasm. It catalyses the reaction Endonucleolytic cleavage to 5'-phosphomonoester.. Endonuclease that specifically degrades the RNA of RNA-DNA hybrids. The protein is Ribonuclease HII of Staphylococcus saprophyticus subsp. saprophyticus (strain ATCC 15305 / DSM 20229 / NCIMB 8711 / NCTC 7292 / S-41).